We begin with the raw amino-acid sequence, 363 residues long: Flagellar P-ring protein (363 aa).

The signal sequence occupies residues 1–20 (MKLKLILAVAMLAFSLPSQA).

Belongs to the FlgI family. As to quaternary structure, the basal body constitutes a major portion of the flagellar organelle and consists of four rings (L,P,S, and M) mounted on a central rod.

The protein localises to the periplasm. It localises to the bacterial flagellum basal body. Its function is as follows. Assembles around the rod to form the L-ring and probably protects the motor/basal body from shearing forces during rotation. The polypeptide is Flagellar P-ring protein (Shewanella sp. (strain MR-7)).